The sequence spans 89 residues: Small ribosomal subunit protein bS20 (89 aa).

Belongs to the bacterial ribosomal protein bS20 family.

Its function is as follows. Binds directly to 16S ribosomal RNA. This is Small ribosomal subunit protein bS20 from Stenotrophomonas maltophilia (strain R551-3).